The following is a 95-amino-acid chain: Protein RALF-like 16 (95 aa).

An N-terminal signal peptide occupies residues 1–29; the sequence is MVAYEKSPIVFLFATMMLVMFLFCGSGEA. 2 disulfides stabilise this stretch: Cys45/Cys53 and Cys65/Cys71.

This sequence belongs to the plant rapid alkalinization factor (RALF) family.

It is found in the secreted. Its function is as follows. Cell signaling peptide that may regulate plant stress, growth, and development. Mediates a rapid alkalinization of extracellular space by mediating a transient increase in the cytoplasmic Ca(2+) concentration leading to a calcium-dependent signaling events through a cell surface receptor and a concomitant activation of some intracellular mitogen-activated protein kinases. This is Protein RALF-like 16 (RALFL16) from Arabidopsis thaliana (Mouse-ear cress).